A 677-amino-acid chain; its full sequence is Transketolase 1 (677 aa).

Histidine 27 lines the substrate pocket. Residues histidine 66 and 114–116 (GPL) each bind thiamine diphosphate. Residue aspartate 155 participates in Mg(2+) binding. Residues glycine 156 and asparagine 185 each contribute to the thiamine diphosphate site. Asparagine 185 and isoleucine 187 together coordinate Mg(2+). Residues histidine 261, arginine 356, and serine 383 each coordinate substrate. A thiamine diphosphate-binding site is contributed by histidine 261. Thiamine diphosphate-binding residues include glutamate 415 and phenylalanine 442. Glutamate 415 serves as the catalytic Proton donor. Substrate-binding residues include histidine 466, aspartate 474, and arginine 525.

Belongs to the transketolase family. As to quaternary structure, homodimer. Requires Mg(2+) as cofactor. The cofactor is Ca(2+). Mn(2+) is required as a cofactor. It depends on Co(2+) as a cofactor. Thiamine diphosphate serves as cofactor.

The catalysed reaction is D-sedoheptulose 7-phosphate + D-glyceraldehyde 3-phosphate = aldehydo-D-ribose 5-phosphate + D-xylulose 5-phosphate. Its function is as follows. Catalyzes the transfer of a two-carbon ketol group from a ketose donor to an aldose acceptor, via a covalent intermediate with the cofactor thiamine pyrophosphate. This Candida albicans (Yeast) protein is Transketolase 1 (TKT1).